Reading from the N-terminus, the 146-residue chain is D-aminoacyl-tRNA deacylase (146 aa).

A Gly-cisPro motif, important for rejection of L-amino acids motif is present at residues 138-139 (GP).

The protein belongs to the DTD family. As to quaternary structure, homodimer.

The protein localises to the cytoplasm. The catalysed reaction is glycyl-tRNA(Ala) + H2O = tRNA(Ala) + glycine + H(+). The enzyme catalyses a D-aminoacyl-tRNA + H2O = a tRNA + a D-alpha-amino acid + H(+). Functionally, an aminoacyl-tRNA editing enzyme that deacylates mischarged D-aminoacyl-tRNAs. Also deacylates mischarged glycyl-tRNA(Ala), protecting cells against glycine mischarging by AlaRS. Acts via tRNA-based rather than protein-based catalysis; rejects L-amino acids rather than detecting D-amino acids in the active site. By recycling D-aminoacyl-tRNA to D-amino acids and free tRNA molecules, this enzyme counteracts the toxicity associated with the formation of D-aminoacyl-tRNA entities in vivo and helps enforce protein L-homochirality. The chain is D-aminoacyl-tRNA deacylase from Xanthomonas euvesicatoria pv. vesicatoria (strain 85-10) (Xanthomonas campestris pv. vesicatoria).